The sequence spans 450 residues: UDP-N-acetylmuramoylalanine--D-glutamate ligase (450 aa).

Residue 119 to 125 coordinates ATP; sequence GSNGKTT.

The protein belongs to the MurCDEF family.

It localises to the cytoplasm. The catalysed reaction is UDP-N-acetyl-alpha-D-muramoyl-L-alanine + D-glutamate + ATP = UDP-N-acetyl-alpha-D-muramoyl-L-alanyl-D-glutamate + ADP + phosphate + H(+). It functions in the pathway cell wall biogenesis; peptidoglycan biosynthesis. Functionally, cell wall formation. Catalyzes the addition of glutamate to the nucleotide precursor UDP-N-acetylmuramoyl-L-alanine (UMA). The sequence is that of UDP-N-acetylmuramoylalanine--D-glutamate ligase from Streptococcus pneumoniae (strain P1031).